The primary structure comprises 354 residues: MEEFKRYFELDRYQQHDFLYPLIFQEYIYALAHDHGLNRSIFLENAGYDNKSSLLIVKRLITRMYQQNHFLISVNDSNQNQFLGHNKNFSYQMISEGFSVIVEIPFSLRLISSLEGKXIVXYPNLRSIHSIFPFLEDKFLHLNYVLDILIPYPIHLEILVQTLRHWVKDASSLHLLRFFLHEYRNWNSLITPKKXSFSCSKRNERLSLFLYNSHVXEYESIFVFLRNQSSHXRSTSSGALLERIHFYGKIELRVGVFAKDFQSXLWLFKDPFIHYVRXQGKSILASKGTXLLMNKWKYYLVNCWXCHFYVWSQPRNIYRNQLSNYSLDFLGYLSSXRLNTSMERSQMLENSYLI.

This sequence belongs to the intron maturase 2 family. MatK subfamily.

The protein resides in the plastid. It localises to the chloroplast. In terms of biological role, usually encoded in the trnK tRNA gene intron. Probably assists in splicing its own and other chloroplast group II introns. The protein is Maturase K (matK) of Hydrangea quercifolia (Oakleaf hydrangea).